Consider the following 389-residue polypeptide: Gastricsin (389 aa).

A signal peptide spans 1–16 (MKWMVVVLLCLQLLEA). Positions 17 to 59 (KVVKVPLKKLKSLRETMKEKGLLEEFLKNHKYDPAQKYRYTDF) are cleaved as a propeptide — activation peptide. Residues 73–386 (YFGEISIGTP…DMGNNRVGFA (314 aa)) form the Peptidase A1 domain. The active site involves Asp-91. Intrachain disulfides connect Cys-104–Cys-109 and Cys-268–Cys-272. Asp-277 is an active-site residue. The cysteines at positions 311 and 344 are disulfide-linked.

This sequence belongs to the peptidase A1 family.

The protein localises to the secreted. It catalyses the reaction More restricted specificity than pepsin A, but shows preferential cleavage at Tyr-|-Xaa bonds. High activity on hemoglobin.. Its function is as follows. Hydrolyzes a variety of proteins. In Rhinolophus ferrumequinum (Greater horseshoe bat), this protein is Gastricsin (PGC).